Consider the following 106-residue polypeptide: MIPGEYHVKPGQIALNTGRATCRVVVENHGDRPIQVGSHYHFAEVNPALKFDRQQAAGYRLNIPAGTAVRFEPGQKREVELVAFAGHRAVFGFRGEVMGPLEVNDE.

This sequence belongs to the urease beta subunit family. Heterotrimer of UreA (gamma), UreB (beta) and UreC (alpha) subunits. Three heterotrimers associate to form the active enzyme. The apoenzyme interacts with an accessory complex composed of UreD, UreF and UreG, which is required for the assembly of the nickel containing metallocenter of UreC. The UreE protein may also play a direct role as a metallochaperone in nickel transfer to the urease apoprotein.

Its subcellular location is the cytoplasm. It catalyses the reaction urea + 2 H2O + H(+) = hydrogencarbonate + 2 NH4(+). Its pathway is nitrogen metabolism; urea degradation; CO(2) and NH(3) from urea (urease route): step 1/1. With respect to regulation, the apoenzyme can be activated in vitro in the presence of nickel ions and carbon dioxide, which promotes carboxylation of 'Lys-217' of the UreC (alpha) subunit. In Klebsiella aerogenes (Enterobacter aerogenes), this protein is Urease subunit beta.